The chain runs to 643 residues: MHGLLLAGLLALPLNVFAHPTESHSSGVSRRAIDITSYRLPQISKYTKSDAVPKQDGESFTTSSTGDDNVSSGDYVTTATNWLKKTLPKATYRLVNDHYIGDSGIGHVHFRQTAHGIDIDNTDFNVNIGRDGKVFSFGNSFYDGEIPKANPMVKRDFSDPVNALHGAIQTLNLPVTAKPENVKAKPVEGKENFKFEGTSGALSDPKAQLVYLQKDGGLVLSWKVETDVGDNWLLTYVDANKNDQVHSVVDYVSAAEYQVYPWGINDPTEGNRTTIHLPWLKTLSTDWHIDGKGWYPTTRGNNAIAQENPTGHPEYENNYRPKSPLFIFKYPYSPAMTPPSSYRDASITQLFYTTNVYHDVLYILGFNEKAGNFQINNWNKGGVGGDFAILNSQDGSGVNNANFATPPDGQPGRMRMYTWNASTPERDGCFEAGIVIHEYTHGVSNRLTGGPENSRCLAALESGGMGEGWSDFFATAIRLKAGDTRATDYTMGEWASNRPNGIRKYRYSTSLTTNPHMYVDADGLTSVHAIGTIWASMLYELLWNLIDKHGKGDVTKIRPVLKNGVPTDGRHLAMKIVLDGMALQPCLPNFVQARDAILDADKNLTQGSNKCEIWKAFAKRGLGVGAAFNQTKRTGSNELPAGC.

A signal peptide spans 1–18 (MHGLLLAGLLALPLNVFA). A propeptide spanning residues 19–254 (HPTESHSSGV…VHSVVDYVSA (236 aa)) is cleaved from the precursor. A disordered region spans residues 49–69 (SDAVPKQDGESFTTSSTGDDN). A compositionally biased stretch (polar residues) spans 58–69 (ESFTTSSTGDDN). N-linked (GlcNAc...) asparagine glycans are attached at residues N271 and N420. H437 serves as a coordination point for Zn(2+). The active site involves E438. H441 serves as a coordination point for Zn(2+). Residues N603 and N629 are each glycosylated (N-linked (GlcNAc...) asparagine).

This sequence belongs to the peptidase M36 family. The cofactor is Zn(2+).

The protein resides in the secreted. Functionally, secreted metalloproteinase probably acting as a virulence factor. This is Probable extracellular metalloproteinase 4 (MEP4) from Trichophyton verrucosum (strain HKI 0517).